A 284-amino-acid polypeptide reads, in one-letter code: Diaminopimelate epimerase (284 aa).

The substrate site is built by Asn20, Gln53, and Asn73. Cys82 (proton donor) is an active-site residue. Residues 83–84 (GN), Asn167, Asn200, and 218–219 (ER) contribute to the substrate site. Cys227 serves as the catalytic Proton acceptor. 228-229 (GS) contacts substrate.

It belongs to the diaminopimelate epimerase family. As to quaternary structure, homodimer.

The protein resides in the cytoplasm. It carries out the reaction (2S,6S)-2,6-diaminopimelate = meso-2,6-diaminopimelate. The protein operates within amino-acid biosynthesis; L-lysine biosynthesis via DAP pathway; DL-2,6-diaminopimelate from LL-2,6-diaminopimelate: step 1/1. In terms of biological role, catalyzes the stereoinversion of LL-2,6-diaminopimelate (L,L-DAP) to meso-diaminopimelate (meso-DAP), a precursor of L-lysine and an essential component of the bacterial peptidoglycan. This chain is Diaminopimelate epimerase, found in Xanthomonas euvesicatoria pv. vesicatoria (strain 85-10) (Xanthomonas campestris pv. vesicatoria).